The chain runs to 404 residues: Riboflavin biosynthesis protein RibBA (404 aa).

The DHBP synthase stretch occupies residues 1 to 204 (MEELKLNTIE…IRDLIAYRLK (204 aa)). D-ribulose 5-phosphate is bound by residues 30-31 (RE), D35, 143-147 (RAGHT), and E167. Residue E31 coordinates Mg(2+). H146 serves as a coordination point for Mg(2+). A GTP cyclohydrolase II region spans residues 205-404 (QESLVEKGVE…RMGHTLHFNK (200 aa)). 255-259 (RVHSS) is a GTP binding site. Positions 260, 271, and 273 each coordinate Zn(2+). Residues Q276, 298–300 (EGR), and T320 each bind GTP. Catalysis depends on D332, which acts as the Proton acceptor; for GTP cyclohydrolase activity. Catalysis depends on R334, which acts as the Nucleophile; for GTP cyclohydrolase activity. Residues T355 and K360 each contribute to the GTP site.

In the N-terminal section; belongs to the DHBP synthase family. This sequence in the C-terminal section; belongs to the GTP cyclohydrolase II family. Mg(2+) is required as a cofactor. Requires Mn(2+) as cofactor. The cofactor is Zn(2+).

It catalyses the reaction D-ribulose 5-phosphate = (2S)-2-hydroxy-3-oxobutyl phosphate + formate + H(+). The enzyme catalyses GTP + 4 H2O = 2,5-diamino-6-hydroxy-4-(5-phosphoribosylamino)-pyrimidine + formate + 2 phosphate + 3 H(+). It participates in cofactor biosynthesis; riboflavin biosynthesis; 2-hydroxy-3-oxobutyl phosphate from D-ribulose 5-phosphate: step 1/1. It functions in the pathway cofactor biosynthesis; riboflavin biosynthesis; 5-amino-6-(D-ribitylamino)uracil from GTP: step 1/4. Catalyzes the conversion of D-ribulose 5-phosphate to formate and 3,4-dihydroxy-2-butanone 4-phosphate. Its function is as follows. Catalyzes the conversion of GTP to 2,5-diamino-6-ribosylamino-4(3H)-pyrimidinone 5'-phosphate (DARP), formate and pyrophosphate. The chain is Riboflavin biosynthesis protein RibBA from Phocaeicola vulgatus (strain ATCC 8482 / DSM 1447 / JCM 5826 / CCUG 4940 / NBRC 14291 / NCTC 11154) (Bacteroides vulgatus).